A 154-amino-acid polypeptide reads, in one-letter code: Endoribonuclease YbeY (154 aa).

His113, His117, and His123 together coordinate Zn(2+).

Belongs to the endoribonuclease YbeY family. The cofactor is Zn(2+).

Its subcellular location is the cytoplasm. Functionally, single strand-specific metallo-endoribonuclease involved in late-stage 70S ribosome quality control and in maturation of the 3' terminus of the 16S rRNA. The chain is Endoribonuclease YbeY from Vibrio cholerae serotype O1 (strain ATCC 39541 / Classical Ogawa 395 / O395).